The primary structure comprises 290 residues: GTPase Era (290 aa).

An Era-type G domain is found at 2–169 (KSGFAAILGR…KNKIYENFSE (168 aa)). A G1 region spans residues 10 to 17 (GRPSTGKS). 10-17 (GRPSTGKS) serves as a coordination point for GTP. Residues 36–40 (QTTRN) are G2. Residues 57–60 (DTPG) form a G3 region. Residues 57–61 (DTPGF) and 119–122 (NKID) each bind GTP. The segment at 119 to 122 (NKID) is G4. The G5 stretch occupies residues 148-150 (ISA). The 77-residue stretch at 200–276 (LKEELPYSLY…NLFLQVKLKK (77 aa)) folds into the KH type-2 domain.

This sequence belongs to the TRAFAC class TrmE-Era-EngA-EngB-Septin-like GTPase superfamily. Era GTPase family. In terms of assembly, monomer.

The protein resides in the cytoplasm. The protein localises to the cell inner membrane. In terms of biological role, an essential GTPase that binds both GDP and GTP, with rapid nucleotide exchange. Plays a role in 16S rRNA processing and 30S ribosomal subunit biogenesis and possibly also in cell cycle regulation and energy metabolism. The sequence is that of GTPase Era from Borreliella burgdorferi (strain ATCC 35210 / DSM 4680 / CIP 102532 / B31) (Borrelia burgdorferi).